A 353-amino-acid chain; its full sequence is Soluble interferon alpha/beta receptor OPG204 (353 aa).

Residues 1–21 (MTMKMMVHIYFVSLSLLLLLF) form the signal peptide. Ig-like C2-type domains follow at residues 67-139 (LGEP…KNGD) and 157-239 (PKTY…IVVS). 2 disulfides stabilise this stretch: Cys-75-Cys-131 and Cys-174-Cys-223. 5 N-linked (GlcNAc...) asparagine; by host glycosylation sites follow: Asn-119, Asn-184, Asn-263, Asn-271, and Asn-323. Positions 248–347 (PSQDHRFKLI…HNYYFEKTLT (100 aa)) constitute an Ig-like V-type domain. Cys-274 and Cys-335 are joined by a disulfide.

The protein belongs to the interleukin-1 receptor family. In terms of assembly, interacts with host IFNA1.

It is found in the secreted. Functionally, counteracts the antiviral effects of host IFN-alpha/beta and key IFN-inducible proteins involved in viral RNA degradation suxh as host OAS1. Acts as a soluble IFN-alpha receptor and thus inhibits the interaction between host IFN-alpha and its receptor. In Homo sapiens (Human), this protein is Soluble interferon alpha/beta receptor OPG204 (OPG204).